The primary structure comprises 624 residues: Glutamine--fructose-6-phosphate aminotransferase [isomerizing] (624 aa).

Cysteine 2 functions as the Nucleophile; for GATase activity in the catalytic mechanism. The region spanning 2–226 (CGIVGYVGQQ…QDQAVVLTAD (225 aa)) is the Glutamine amidotransferase type-2 domain. SIS domains are found at residues 297–436 (SDQE…ARGT) and 469–614 (LAQR…VDKP). The For Fru-6P isomerization activity role is filled by lysine 619.

In terms of assembly, homodimer.

It is found in the cytoplasm. The enzyme catalyses D-fructose 6-phosphate + L-glutamine = D-glucosamine 6-phosphate + L-glutamate. In terms of biological role, catalyzes the first step in hexosamine metabolism, converting fructose-6P into glucosamine-6P using glutamine as a nitrogen source. The protein is Glutamine--fructose-6-phosphate aminotransferase [isomerizing] of Mycolicibacterium paratuberculosis (strain ATCC BAA-968 / K-10) (Mycobacterium paratuberculosis).